Reading from the N-terminus, the 674-residue chain is ATP-dependent DNA helicase Rep (674 aa).

In terms of domain architecture, UvrD-like helicase ATP-binding spans 1 to 280 (MRLNPGQQHA…IKLEQNYRSS (280 aa)). ATP contacts are provided by residues 22–29 (AGAGSGKT) and R278. Positions 281–562 (GRILKAANIL…QLMTLHASKG (282 aa)) constitute a UvrD-like helicase C-terminal domain.

Belongs to the helicase family. UvrD subfamily. Homodimer.

The enzyme catalyses Couples ATP hydrolysis with the unwinding of duplex DNA by translocating in the 3'-5' direction.. It catalyses the reaction ATP + H2O = ADP + phosphate + H(+). In terms of biological role, rep helicase is a single-stranded DNA-dependent ATPase involved in DNA replication; it can initiate unwinding at a nick in the DNA. It binds to the single-stranded DNA and acts in a progressive fashion along the DNA in the 3' to 5' direction. In Salmonella typhimurium (strain LT2 / SGSC1412 / ATCC 700720), this protein is ATP-dependent DNA helicase Rep.